Here is a 302-residue protein sequence, read N- to C-terminus: Probable alpha-L-glutamate ligase (302 aa).

The region spanning M104–E287 is the ATP-grasp domain. ATP contacts are provided by residues K141, E178–F179, D187, and R211–N213. D248, E260, and N262 together coordinate Mg(2+). Positions 248, 260, and 262 each coordinate Mn(2+).

Belongs to the RimK family. Mg(2+) serves as cofactor. Mn(2+) is required as a cofactor.

The chain is Probable alpha-L-glutamate ligase from Halorhodospira halophila (strain DSM 244 / SL1) (Ectothiorhodospira halophila (strain DSM 244 / SL1)).